Reading from the N-terminus, the 714-residue chain is RanBP-type and C3HC4-type zinc finger-containing protein 1 (714 aa).

Disordered stretches follow at residues 1–23 (MSLS…SHLG) and 152–172 (SSST…SKAP). Polar residues predominate over residues 14–23 (PAQSSSSHLG). Residues 225-301 (LAVVVEDASS…TAFLYLISAR (77 aa)) form the Ubiquitin-like domain. The segment at 394–426 (RTSIQPGWACPTCTYINKPTRPGCEMCSADRPE) adopts a RanBP2-type zinc-finger fold. Residues 482 to 710 (ERVECRICYV…VNKQRCHPKC (229 aa)) form a TRIAD supradomain region. Zn(2+) contacts are provided by Cys-486, Cys-489, Cys-504, His-506, Cys-509, Cys-512, Cys-527, Cys-536, Cys-575, Cys-580, Cys-595, Cys-598, Cys-603, Cys-606, His-610, Cys-615, Cys-651, and Cys-654. The RING-type 1 zinc finger occupies 486 to 536 (CRICYVELESGEGVLLRECLHCFCKECLRSVILMSEDPQVACPYRDESYAC). The IBR-type zinc finger occupies 555–615 (QHWLQRGLSV…CKAIHEGMNC (61 aa)). The segment at 651–680 (CPQCGIIVQKKEGCDWLRCTVCHTEICWVT) adopts an RING-type 2; atypical zinc-finger fold. Cys-664 is a catalytic residue. Zn(2+)-binding residues include Cys-669 and Cys-672.

The protein belongs to the RBR family. Component of the LUBAC complex (linear ubiquitin chain assembly complex).

It catalyses the reaction [E2 ubiquitin-conjugating enzyme]-S-ubiquitinyl-L-cysteine + [acceptor protein]-L-lysine = [E2 ubiquitin-conjugating enzyme]-L-cysteine + [acceptor protein]-N(6)-ubiquitinyl-L-lysine.. The protein operates within protein modification; protein ubiquitination. In terms of biological role, component of the LUBAC complex which conjugates linear ('Met-1'-linked) polyubiquitin chains to substrates and plays a key role in NF-kappa-B activation and regulation of inflammation. LUBAC conjugates linear polyubiquitin to ikbkg and RIPK1 and is involved in activation of the canonical NF-kappa-B and the JNK signaling pathways. Linear ubiquitination mediated by the LUBAC complex interferes with TNF-induced cell death and thereby prevents inflammation. LUBAC is recruited to the TNF-R1 signaling complex (TNF-RSC) to conjugate linear polyubiquitin to ikbkg and possibly other components contributing to the stability of the complex. The LUBAC complex is also involved in innate immunity by conjugating linear polyubiquitin chains at the surface of bacteria invading the cytosol to form the ubiquitin coat surrounding bacteria. LUBAC is not able to initiate formation of the bacterial ubiquitin coat, and can only promote formation of linear polyubiquitins on pre-existing ubiquitin. The bacterial ubiquitin coat acts as an 'eat-me' signal for xenophagy and promotes NF-kappa-B activation. Binds polyubiquitin of different linkage types. The chain is RanBP-type and C3HC4-type zinc finger-containing protein 1 (rbck1) from Danio rerio (Zebrafish).